We begin with the raw amino-acid sequence, 1320 residues long: MSMLKPSGLKAPTKILKPGSTALKTPAAAAAPLEKTVPSEKASGPPSSETQEEFVDDFRVGERVWVNGNKPGFIQFLGETQFAPGQWAGIVLDEPIGKNDGSVAGVRYFQCEPLKGIFTRPSKLTRKVQAEDEANGLQTAHARAASPLSTAAATMVSSSPATPSNIPQKPSQPVAKETSATPQISNLTKTASESISNLSEAGSVKKGERELKIGDRVLVGGTKAGVVRFLGETDFAKGEWCGVELDEPLGKNDGAVAGTRYFQCQPKYGLFAPVHKVTKIGFPSTTPAKAKAAAVRRVMATTPASLKRSPSASSLSSMSSVASSVSSKPSRTGLLTETSSRYARKISGTTALQEALKEKQQHIEQLLAERDLERAEVAKATSHVGEIEQELALARDGHDQHVLELEAKMDQLRTMVEAADREKVELLNQLEEEKRKVEDLQFRVEEESITKGDLETQTKLEHARIKELEQSLLFEKTKADKLQRELEDTRVATVSEKSRIMELEKDLALRVQEVAELRRRLESSKPPGDVDMSLSLLQEISALQEKLEVTHTDHQNEVTSLKDHFGTREEMFQKEIKALHAATEKLSKENESLRSKLDHANKENSDVIALWKSKLETAIASHQQAMEELKVSFSKGIGTDSAEFAELKTQIERLRLDYQHEIESLQSKQDSERSAHAKEMESMKAKLMKIIKEKEDSLEAVKARLDTAEDQHLVEMEEMLSKLQEAEIKKEKFASASEEAVSTQTSMQDTVNKLHQKEEQFNMLSSELEKLRENLTDMEAKFKEKDEREDQLVKAKEKLENDIAEIMKMSGDNSSQLTKMNDELRLKERSVEELQLKLTKANENASLLQKSIGEVTLKAEQSQQEAAKKHEEEKKELENKLLELEKKMETSHYQCQDLKAKYEKASSETKIKHEEILQNFQKMLVDTEDKLKAAQEANRDLMQDMEELKSQADKAKAAQTAEDAMQIMEQMTKEKTETLASLEDTKQTNAKLQSELDTLKENNLKTVEELNKSKELLNEENQKMEEFKKEIETLKQAAAQKSQQLSALQEENVKLAEELGRTRDEVTSHQKLEEERSVLNNQLLEMKKSLPSNTLRESEYRKDADEEKASLQKSISLTSALLTEKDAELEKLRNEVTVLRGENASAKSLHSVVQTLESDKVKLELKVKNLELQLKENKRQLSSSSGNTDVQTEEDERAQESQQMIDFLNSVIVDLQRKNQDLKMKVEMMSEAALNGNGEDPNSYDSDDQEKQSKKKPRLFCDICDCFDLHDTEDCPTQAQMSEDPPHSTHHGSRSEERPYCEICEMFGHWATNCNDDETF.

Residues 1 to 53 (MSMLKPSGLKAPTKILKPGSTALKTPAAAAAPLEKTVPSEKASGPPSSETQEE) are disordered. Over residues 21-35 (TALKTPAAAAAPLEK) the composition is skewed to low complexity. Position 48 is a phosphoserine (serine 48). A Phosphothreonine modification is found at threonine 50. In terms of domain architecture, CAP-Gly 1 spans 78–120 (GETQFAPGQWAGIVLDEPIGKNDGSVAGVRYFQCEPLKGIFTR). Positions 97 to 101 (GKNDG) are important for tubulin binding. Serine 146 carries the post-translational modification Phosphoserine. The segment covering 156 to 171 (VSSSPATPSNIPQKPS) has biased composition (polar residues). The tract at residues 156–181 (VSSSPATPSNIPQKPSQPVAKETSAT) is disordered. Threonine 181 carries the phosphothreonine modification. Serine 194, serine 196, serine 199, and serine 203 each carry phosphoserine. The CAP-Gly 2 domain maps to 231-273 (GETDFAKGEWCGVELDEPLGKNDGAVAGTRYFQCQPKYGLFAP). The segment covering 301 to 331 (TTPASLKRSPSASSLSSMSSVASSVSSKPSR) has biased composition (low complexity). The tract at residues 301–338 (TTPASLKRSPSASSLSSMSSVASSVSSKPSRTGLLTET) is disordered. Residue serine 309 is modified to Phosphoserine. At serine 311 the chain carries Phosphoserine; by PKA. Serine 314 and serine 347 each carry phosphoserine. Positions 1089-1109 (SLPSNTLRESEYRKDADEEKA) are disordered. Residues 1096–1109 (RESEYRKDADEEKA) show a composition bias toward basic and acidic residues. The residue at position 1116 (serine 1116) is a Phosphoserine. Residues 1178–1201 (KRQLSSSSGNTDVQTEEDERAQES) form a disordered region. Residues 1180–1190 (QLSSSSGNTDV) are compositionally biased toward polar residues. The residue at position 1246 (serine 1246) is a Phosphoserine. A CCHC-type zinc finger spans residues 1299 to 1316 (PYCEICEMFGHWATNCND).

As to quaternary structure, interacts with MTOR; phosphorylates and regulates CLIP1. Interacts (via CAP-Gly domains) with tubulin and TUBA1B. Interacts with SLAIN2. Interacts with MAPRE1 and MAPRE3. Interacts (via zinc finger) with DCTN1. Binds preferentially to tyrosinated microtubules, and only marginally to detyrosinated microtubules. Phosphorylated. Phosphorylation induces conformational changes by increasing the affinity of the N-terminus for C-terminus, resulting in inhibition of its function thus decreasing its binding to microtubules and DCTN1. Exhibits a folded, autoinhibited conformation when phosphorylated and an open conformation when dephosphorylated with increased binding affinity to microtubules and DCTN1. Phosphorylation regulates its recruitment to tyrosinated microtubules and the recruitment of vesicular cargo to microtubules in neurons. Phosphorylation by MTOR may positively regulate CLIP1 association with microtubules.

The protein localises to the cytoplasm. It localises to the cytoskeleton. It is found in the cytoplasmic vesicle membrane. The protein resides in the cell projection. Its subcellular location is the ruffle. In terms of biological role, binds to the plus end of microtubules and regulates the dynamics of the microtubule cytoskeleton. Promotes microtubule growth and microtubule bundling. Links cytoplasmic vesicles to microtubules and thereby plays an important role in intracellular vesicle trafficking. Plays a role macropinocytosis and endosome trafficking. This Rattus norvegicus (Rat) protein is CAP-Gly domain-containing linker protein 1 (Clip1).